The sequence spans 269 residues: Phosphonoacetaldehyde hydrolase (269 aa).

D10 functions as the Nucleophile in the catalytic mechanism. Residues D10 and A12 each contribute to the Mg(2+) site. The active-site Schiff-base intermediate with substrate is the K52. D186 provides a ligand contact to Mg(2+).

Belongs to the HAD-like hydrolase superfamily. PhnX family. Homodimer. It depends on Mg(2+) as a cofactor.

It carries out the reaction phosphonoacetaldehyde + H2O = acetaldehyde + phosphate + H(+). Its function is as follows. Involved in phosphonate degradation. The sequence is that of Phosphonoacetaldehyde hydrolase from Klebsiella pneumoniae subsp. pneumoniae (strain ATCC 700721 / MGH 78578).